A 1337-amino-acid polypeptide reads, in one-letter code: Receptor-type tyrosine-protein phosphatase eta (1337 aa).

A signal peptide spans 1–35; the sequence is MKPAAREARLPPRSPGLRWALPLLLLLLRLGQILC. The Extracellular segment spans residues 36 to 975; the sequence is AGGTPSPIPD…LPQDPGVICG (940 aa). Polar residues-rich tracts occupy residues 67–82 and 89–119; these read SFHK…VETN and SSGA…STGP. Residues 67–124 are disordered; the sequence is SFHKQNGTGTPQVETNTSEDGESSGANDSLRTPEQGSNGTDGASQKTPSSTGPSPVFD. N-linked (GlcNAc...) asparagine glycosylation is found at Asn72, Asn82, Asn93, Asn104, Asn142, Asn172, Asn192, Asn231, Asn258, Asn278, Asn342, Asn351, Asn376, Asn391, Asn396, Asn413, Asn431, Asn501, Asn525, Asn536, Asn582, Asn603, Asn618, Asn628, Asn637, Asn666, Asn669, Asn761, Asn772, Asn784, Asn790, Asn824, Asn910, and Asn937. Fibronectin type-III domains lie at 121–209, 207–291, 271–364, 368–456, 457–541, 542–623, 625–720, 721–817, and 816–902; these read PVFD…EPIP, PIPV…EGGL, NPYL…EFRT, QVFD…PPVP, VSDF…TVPS, AVFD…TAQY, RPSN…TDPA, SMAS…TDPP, and PPPP…SEVL. The disordered stretch occupies residues 278–327; sequence NKTKGDPLGTEGGLDASNTERSRAGSPTAPVHDESLVGPVDPSSGQQSRD. A helical transmembrane segment spans residues 976–996; it reads AVFGCIFGALVIVTVGGFIFW. Over 997 to 1337 the chain is Cytoplasmic; that stretch reads RKKRKDAKNN…TFGKTNGYIA (341 aa). Residue Ser1009 is modified to Phosphoserine. In terms of domain architecture, Tyrosine-protein phosphatase spans 1041–1298; sequence FAEEYEDLKL…VFLNQCVLDI (258 aa). Residues Asp1205, 1239-1245, and Gln1283 contribute to the substrate site; that span reads CSAGVGR. The active-site Phosphocysteine intermediate is the Cys1239.

The protein belongs to the protein-tyrosine phosphatase family. Receptor class 3 subfamily. Monomer. Interacts with CTNNB1 (phosphorylated) and JUP (phosphorylated). Interacts with FLT3 (phosphorylated). Interacts with GAB1 and GRB2. In terms of processing, N- and O-glycosylated. N-glycosylated. Expressed in the promyelocytic cell line HL-60, the granulocyte-macrophage colony-stimulating factor-dependent leukemic cell line F-36P, and the IL3 and erythropoietin-dependent leukemic cell line F-36E. Expressed predominantly in epithelial cells and lymphocytes. Enhanced expression at high cell density. In terms of tissue distribution, expressed in the brain.

The protein localises to the cell membrane. It is found in the cell projection. The protein resides in the ruffle membrane. Its subcellular location is the cell junction. It localises to the secreted. The protein localises to the extracellular space. The catalysed reaction is O-phospho-L-tyrosyl-[protein] + H2O = L-tyrosyl-[protein] + phosphate. Tyrosine phosphatase which dephosphorylates or contributes to the dephosphorylation of CTNND1, FLT3, PDGFRB, MET, KDR, LYN, SRC, MAPK1, MAPK3, EGFR, TJP1, OCLN, PIK3R1 and PIK3R2. Plays a role in cell adhesion, migration, proliferation and differentiation. Has a role in megakaryocytes and platelet formation. Involved in vascular development. Regulator of macrophage adhesion and spreading. Positively affects cell-matrix adhesion. Positive regulator of platelet activation and thrombosis. Negative regulator of cell proliferation. Negative regulator of PDGF-stimulated cell migration; through dephosphorylation of PDGFR. Positive regulator of endothelial cell survival, as well as of VEGF-induced SRC and AKT activation; through KDR dephosphorylation. Negative regulator of EGFR signaling pathway; through EGFR dephosphorylation. Enhances the barrier function of epithelial junctions during reassembly. Negatively regulates T-cell receptor (TCR) signaling. Upon T-cell TCR activation, it is up-regulated and excluded from the immunological synapses, while upon T-cell-antigen presenting cells (APC) disengagement, it is no longer excluded and can dephosphorylate PLCG1 and LAT to down-regulate prolongation of signaling. In terms of biological role, activates angiogenesis and cell migration. Downregulates the expression of the endothelial adhesion molecules ICAM1 and VCAM1. The sequence is that of Receptor-type tyrosine-protein phosphatase eta (PTPRJ) from Homo sapiens (Human).